The following is a 295-amino-acid chain: Sulfotransferase 1E1 (295 aa).

3'-phosphoadenylyl sulfate is bound at residue 48–53; the sequence is KSGTTW. 106-108 provides a ligand contact to substrate; it reads KSH. His108 acts as the Proton acceptor in catalysis. 3'-phosphoadenylyl sulfate-binding residues include Arg130, Ser138, and Tyr193. Phosphoserine; by PKA occurs at positions 216 and 228. 3'-phosphoadenylyl sulfate is bound by residues 227–232 and 257–259; these read TSFQEM and RKG.

Belongs to the sulfotransferase 1 family. As to quaternary structure, homodimer.

The protein resides in the cytoplasm. It is found in the cytosol. It catalyses the reaction estrone + 3'-phosphoadenylyl sulfate = estrone 3-sulfate + adenosine 3',5'-bisphosphate + H(+). The catalysed reaction is (24S)-hydroxycholesterol + 3'-phosphoadenylyl sulfate = (24S)-hydroxycholesterol 3-sulfate + adenosine 3',5'-bisphosphate + H(+). It carries out the reaction 17beta-estradiol + 3'-phosphoadenylyl sulfate = 17beta-estradiol 3-sulfate + adenosine 3',5'-bisphosphate + H(+). The enzyme catalyses 3beta-hydroxyandrost-5-en-17-one + 3'-phosphoadenylyl sulfate = dehydroepiandrosterone 3-sulfate + adenosine 3',5'-bisphosphate + H(+). It catalyses the reaction 4-ethylphenol + 3'-phosphoadenylyl sulfate = 4-ethylphenyl sulfate + adenosine 3',5'-bisphosphate + H(+). Inhibited by estradiol. Functionally, sulfotransferase that utilizes 3'-phospho-5'-adenylyl sulfate (PAPS) as sulfonate donor to catalyze the sulfate conjugation of estradiol and estrone. Is a key enzyme in estrogen homeostasis, the sulfation of estrogens leads to their inactivation. Also sulfates dehydroepiandrosterone (DHEA), pregnenolone, (24S)-hydroxycholesterol and xenobiotic compounds like ethinylestradiol, equalenin, diethyl stilbesterol and 1-naphthol at significantly lower efficiency. Does not sulfonate cortisol, testosterone and dopamine. May play a role in gut microbiota-host metabolic interaction. O-sulfonates 4-ethylphenol (4-EP), a dietary tyrosine-derived metabolite produced by gut bacteria. The product 4-EPS crosses the blood-brain barrier and may negatively regulate oligodendrocyte maturation and myelination, affecting the functional connectivity of different brain regions associated with the limbic system. The polypeptide is Sulfotransferase 1E1 (SULT1E1) (Bos taurus (Bovine)).